A 364-amino-acid chain; its full sequence is Probable dual-specificity RNA methyltransferase RlmN (364 aa).

Catalysis depends on Glu107, which acts as the Proton acceptor. Positions 113–346 (HDYGNSVCVT…ATIRREQGSD (234 aa)) constitute a Radical SAM core domain. A disulfide bridge links Cys120 with Cys351. Residues Cys127, Cys131, and Cys134 each contribute to the [4Fe-4S] cluster site. S-adenosyl-L-methionine contacts are provided by residues 177-178 (GE), Ser209, 232-234 (SLH), and Asn308. Cys351 functions as the S-methylcysteine intermediate in the catalytic mechanism.

It belongs to the radical SAM superfamily. RlmN family. [4Fe-4S] cluster is required as a cofactor.

The protein resides in the cytoplasm. The catalysed reaction is adenosine(2503) in 23S rRNA + 2 reduced [2Fe-2S]-[ferredoxin] + 2 S-adenosyl-L-methionine = 2-methyladenosine(2503) in 23S rRNA + 5'-deoxyadenosine + L-methionine + 2 oxidized [2Fe-2S]-[ferredoxin] + S-adenosyl-L-homocysteine. The enzyme catalyses adenosine(37) in tRNA + 2 reduced [2Fe-2S]-[ferredoxin] + 2 S-adenosyl-L-methionine = 2-methyladenosine(37) in tRNA + 5'-deoxyadenosine + L-methionine + 2 oxidized [2Fe-2S]-[ferredoxin] + S-adenosyl-L-homocysteine. In terms of biological role, specifically methylates position 2 of adenine 2503 in 23S rRNA and position 2 of adenine 37 in tRNAs. Confers resistance to some classes of antibiotics. In Staphylococcus aureus (strain bovine RF122 / ET3-1), this protein is Probable dual-specificity RNA methyltransferase RlmN.